The primary structure comprises 422 residues: Tyrosine--tRNA ligase 1 (422 aa).

Position 36 (Tyr-36) interacts with L-tyrosine. Positions 41–50 match the 'HIGH' region motif; sequence PTAGSLHIGH. The L-tyrosine site is built by Tyr-173 and Gln-177. Positions 233 to 237 match the 'KMSKS' region motif; it reads KFGKT. An ATP-binding site is contributed by Lys-236. Positions 355 to 419 constitute an S4 RNA-binding domain; sequence SDVVTLLLET…GKKQFAMVKL (65 aa).

The protein belongs to the class-I aminoacyl-tRNA synthetase family. TyrS type 1 subfamily. In terms of assembly, homodimer.

The protein localises to the cytoplasm. The enzyme catalyses tRNA(Tyr) + L-tyrosine + ATP = L-tyrosyl-tRNA(Tyr) + AMP + diphosphate + H(+). Functionally, catalyzes the attachment of tyrosine to tRNA(Tyr) in a two-step reaction: tyrosine is first activated by ATP to form Tyr-AMP and then transferred to the acceptor end of tRNA(Tyr). The polypeptide is Tyrosine--tRNA ligase 1 (Vibrio vulnificus (strain YJ016)).